A 250-amino-acid polypeptide reads, in one-letter code: NAD-dependent protein deacylase (250 aa).

Residues 1 to 248 (MLGEVSKILA…PKLVEEIRRI (248 aa)) enclose the Deacetylase sirtuin-type domain. 20–39 (GAGISAESGIPTFRGKDGLW) provides a ligand contact to NAD(+). Substrate is bound by residues Tyr-64 and Arg-67. 98–101 (QNVD) contributes to the NAD(+) binding site. The active-site Proton acceptor is the His-116. The Zn(2+) site is built by Cys-124, Cys-127, Cys-150, and Cys-153. NAD(+) is bound by residues 190-192 (GTS), 216-218 (NIE), and Ala-234.

Belongs to the sirtuin family. Class III subfamily. Requires Zn(2+) as cofactor.

Its subcellular location is the cytoplasm. It catalyses the reaction N(6)-acetyl-L-lysyl-[protein] + NAD(+) + H2O = 2''-O-acetyl-ADP-D-ribose + nicotinamide + L-lysyl-[protein]. The catalysed reaction is N(6)-succinyl-L-lysyl-[protein] + NAD(+) + H2O = 2''-O-succinyl-ADP-D-ribose + nicotinamide + L-lysyl-[protein]. Functionally, NAD-dependent lysine deacetylase and desuccinylase that specifically removes acetyl and succinyl groups on target proteins. Modulates the activities of several proteins which are inactive in their acylated form. Deacetylates the N-terminal lysine residue of Alba, the major archaeal chromatin protein and that, in turn, increases Alba's DNA binding affinity, thereby repressing transcription. This chain is NAD-dependent protein deacylase, found in Pyrococcus furiosus (strain ATCC 43587 / DSM 3638 / JCM 8422 / Vc1).